We begin with the raw amino-acid sequence, 136 residues long: Succinate dehydrogenase assembly factor 3, mitochondrial (136 aa).

Residues 1–24 (MRASMVRRMAAAASSSASSSLRPA) constitute a mitochondrion transit peptide.

Belongs to the complex I LYR family. SDHAF3 subfamily. As to quaternary structure, interacts with the iron-sulfur protein subunit within the SDH catalytic dimer.

Its subcellular location is the mitochondrion matrix. Plays an essential role in the assembly of succinate dehydrogenase (SDH), an enzyme complex (also referred to as respiratory complex II) that is a component of both the tricarboxylic acid (TCA) cycle and the mitochondrial electron transport chain, and which couples the oxidation of succinate to fumarate with the reduction of ubiquinone (coenzyme Q) to ubiquinol. Promotes maturation of the iron-sulfur protein subunit of the SDH catalytic dimer, protecting it from the deleterious effects of oxidants. May act together with SDHAF1. The sequence is that of Succinate dehydrogenase assembly factor 3, mitochondrial from Pyricularia oryzae (strain 70-15 / ATCC MYA-4617 / FGSC 8958) (Rice blast fungus).